Here is a 143-residue protein sequence, read N- to C-terminus: Large ribosomal subunit protein uL15 (143 aa).

Belongs to the universal ribosomal protein uL15 family. Part of the 50S ribosomal subunit.

In terms of biological role, binds to the 23S rRNA. The protein is Large ribosomal subunit protein uL15 of Methanococcus aeolicus (strain ATCC BAA-1280 / DSM 17508 / OCM 812 / Nankai-3).